Here is a 189-residue protein sequence, read N- to C-terminus: uncharacterized protein (189 aa).

The protein belongs to the inositol monophosphatase superfamily.

This is an uncharacterized protein from Leptospira biflexa.